The primary structure comprises 346 residues: Elongation factor Ts (346 aa).

The tract at residues 80 to 83 (TDFV) is involved in Mg(2+) ion dislocation from EF-Tu.

This sequence belongs to the EF-Ts family.

The protein resides in the cytoplasm. Its function is as follows. Associates with the EF-Tu.GDP complex and induces the exchange of GDP to GTP. It remains bound to the aminoacyl-tRNA.EF-Tu.GTP complex up to the GTP hydrolysis stage on the ribosome. The protein is Elongation factor Ts (tsf) of Streptococcus pneumoniae (strain ATCC BAA-255 / R6).